We begin with the raw amino-acid sequence, 429 residues long: Adenylosuccinate synthetase (429 aa).

GTP is bound by residues 12–18 (GDEGKGK) and 40–42 (GHT). The active-site Proton acceptor is Asp-13. Asp-13 and Gly-40 together coordinate Mg(2+). Residues 13-16 (DEGK), 38-41 (NAGH), Thr-129, Arg-143, Gln-223, Thr-238, and Arg-302 contribute to the IMP site. The active-site Proton donor is the His-41. Residue 298–304 (TVTGRAR) coordinates substrate. GTP contacts are provided by residues Arg-304, 330–332 (KLD), and 412–414 (STS).

This sequence belongs to the adenylosuccinate synthetase family. As to quaternary structure, homodimer. It depends on Mg(2+) as a cofactor.

The protein resides in the cytoplasm. It carries out the reaction IMP + L-aspartate + GTP = N(6)-(1,2-dicarboxyethyl)-AMP + GDP + phosphate + 2 H(+). Its pathway is purine metabolism; AMP biosynthesis via de novo pathway; AMP from IMP: step 1/2. In terms of biological role, plays an important role in the de novo pathway of purine nucleotide biosynthesis. Catalyzes the first committed step in the biosynthesis of AMP from IMP. This Acidiphilium cryptum (strain JF-5) protein is Adenylosuccinate synthetase.